Here is a 131-residue protein sequence, read N- to C-terminus: Histone H2A.2 (131 aa).

The segment at 1–22 (MSGGKGKAGSSEKASTSRSAKA) is disordered. The residue at position 2 (S2) is an N-acetylserine. N6-acetyllysine occurs at positions 5 and 7. An N5-methylglutamine modification is found at Q105. S128 carries the post-translational modification Phosphoserine. The [ST]-Q motif motif lies at 128-129 (SQ).

This sequence belongs to the histone H2A family. In terms of assembly, the nucleosome is a histone octamer containing two molecules each of H2A, H2B, H3 and H4 assembled in one H3-H4 heterotetramer and two H2A-H2B heterodimers. The octamer wraps approximately 147 bp of DNA. Phosphorylated to form H2AS128ph (gamma-H2A) in response to DNA double-strand breaks (DSBs) generated by exogenous genotoxic agents and by stalled replication forks. Phosphorylation is dependent on the DNA damage checkpoint kinases MEC1/ATR and TEL1/ATM, spreads on either side of a detected DSB site and may mark the surrounding chromatin for recruitment of proteins required for DNA damage signaling and repair. Gamma-H2A is removed from the DNA prior to the strand invasion-primer extension step of the repair process and subsequently dephosphorylated. Dephosphorylation is necessary for efficient recovery from the DNA damage checkpoint. Post-translationally, acetylated by ESA1 to form H2AK4ac and H2AK7ac.

Its subcellular location is the nucleus. It is found in the chromosome. In terms of biological role, core component of nucleosome which plays a central role in DNA double strand break (DSB) repair. Nucleosomes wrap and compact DNA into chromatin, limiting DNA accessibility to the cellular machineries which require DNA as a template. Histones thereby play a central role in transcription regulation, DNA repair, DNA replication and chromosomal stability. DNA accessibility is regulated via a complex set of post-translational modifications of histones, also called histone code, and nucleosome remodeling. The polypeptide is Histone H2A.2 (HTA2) (Candida albicans (strain SC5314 / ATCC MYA-2876) (Yeast)).